The chain runs to 404 residues: Glucoside xylosyltransferase 1 (404 aa).

At 1-6 (MRRYLR) the chain is on the cytoplasmic side. The helical; Signal-anchor for type II membrane protein transmembrane segment at 7–29 (VVGLCLACGFCSLLYAFSQLAVS) threads the bilayer. Residues 30-404 (LEEGAAGGRR…NRYDTPPKER (375 aa)) are Lumenal-facing. Asn201 is a glycosylation site (N-linked (GlcNAc...) asparagine).

Belongs to the glycosyltransferase 8 family.

The protein resides in the membrane. It carries out the reaction 3-O-(beta-D-glucosyl)-L-seryl-[EGF-like domain protein] + UDP-alpha-D-xylose = 3-O-[alpha-D-xylosyl-(1-&gt;3)-beta-D-glucosyl]-L-seryl-[EGF-like domain protein] + UDP + H(+). Glycosyltransferase which elongates the O-linked glucose attached to EGF-like repeats in the extracellular domain of Notch proteins by catalyzing the addition of xylose. The sequence is that of Glucoside xylosyltransferase 1 (Gxylt1) from Mus musculus (Mouse).